The sequence spans 490 residues: MKYQDLRDFIALLEERGELKRIQQEIDPYLEITEISDRTLKAQGPALLFENVKGHDMPVLANLFGTPDRVALGMGQESVTALRDVGKLLAFLKEPEPPKGFRDALNLLPKYKKVLSMSPKSIKKAPCQQVVMSGDDVDLTKLPIQHCWPGDVAPLVTWGLTVTRGPHKERQNLGIYRQQLLGPNKLIMRWLSHRGGALDFQEWCQQHPGERFPVSVALGADPATILGAVTPVPDSLSEYAFAGLLRDSKTEVTQCLSNDLQVPAHAEIILEGYIEPGEMAAEGPYGDHTGYYNEVDEFPVFTVTHVTHRKDPIYHSTYTGRPPDEPAVLGVALNEVFIPLLQKQFPEIVDFYLPPEGCSYRLAVVTMKKQYPGHAKRVMMGVWSFLRQFMYTKFVIVCDDDVNARDWKDVIWAMTTRMDPARDTTLVENTPIDYLDFASPVSGLGSKMGMDATNKWPGETDREWGEPIVMSDEVKQRVDELWDELNIMES.

N172 is a binding site for Mn(2+). Prenylated FMN contacts are provided by residues 175–177, 189–191, and 194–195; these read IYR, RWL, and RG. Position 238 (E238) interacts with Mn(2+). Residue D287 is the Proton donor of the active site.

It belongs to the UbiD family. In terms of assembly, homohexamer. Requires prenylated FMN as cofactor. It depends on Mn(2+) as a cofactor.

It localises to the cell membrane. The catalysed reaction is a 4-hydroxy-3-(all-trans-polyprenyl)benzoate + H(+) = a 2-(all-trans-polyprenyl)phenol + CO2. It functions in the pathway cofactor biosynthesis; ubiquinone biosynthesis. In terms of biological role, catalyzes the decarboxylation of 3-octaprenyl-4-hydroxy benzoate to 2-octaprenylphenol, an intermediate step in ubiquinone biosynthesis. The sequence is that of 3-octaprenyl-4-hydroxybenzoate carboxy-lyase from Idiomarina loihiensis (strain ATCC BAA-735 / DSM 15497 / L2-TR).